The chain runs to 371 residues: MPHKDLPIRPLVRAFDPVGPDTLGPPDLDFASLFRERNVPEDAPLTLYPEQLNVPWHTSLPWTRQSKWWVQGEAAGRDLVNRISADKASERGALPVEFMDERRKGKIDELVEDAVSCAVYLYPSSSPTRIELLTQALLLLFFHDDVMERGATQDDATVCDDFVTMIPKNKHMKRYFAEVLECDPILGPGLLRAIGLFVNAGRKKSPFKQDKYATLAEYLDYRRHDIAKPFMIAAIRFGSGVRQTPEETAPFAELEDLYVQHSILINDLYSYDKEMYEARTINGSVVNAVHVIEKLMCVPPHLAKTITRTMSFDVEKKYYAESERFMRDPALNDKQRTYVIALFDCLTGNLFHHATLGRYSRYAEYVFDCKT.

The Mg(2+) site is built by aspartate 144, asparagine 266, serine 270, and glutamate 274. The D(D/E)XX(D/E) motif motif lies at 144 to 148 (DDVME). The NSE motif signature appears at 266–274 (NDLYSYDKE). The WxxxxxRY motif motif lies at 352-359 (HHATLGRY). Residues arginine 358 and tyrosine 359 each coordinate (2E,6E)-farnesyl diphosphate.

Belongs to the terpene synthase family. As to quaternary structure, homodimer. Mg(2+) is required as a cofactor.

It carries out the reaction (2E,6E)-farnesyl diphosphate + H2O = (-)-alpha-acorenol + diphosphate. The protein operates within sesquiterpene biosynthesis. In terms of biological role, terpene cyclase that catalyzes the cyclization of farnesyl diphosphate (FPP) to the spirocyclic sesquiterpene alpha-acorenol. This is Terpene cyclase 6 from Gibberella fujikuroi (strain CBS 195.34 / IMI 58289 / NRRL A-6831) (Bakanae and foot rot disease fungus).